The sequence spans 789 residues: Ataxin-1 (789 aa).

A compositionally biased stretch (basic and acidic residues) spans 1–30 (MKSNQERSNECLPPKKREIPATSRPSEEKA). The tract at residues 1-73 (MKSNQERSNE…GTSGEHGLQG (73 aa)) is disordered. Lys-16 participates in a covalent cross-link: Glycyl lysine isopeptide (Lys-Gly) (interchain with G-Cter in SUMO). Phosphoserine is present on residues Ser-81 and Ser-87. 2 disordered regions span residues 188 to 237 (QAPG…RATS) and 296 to 397 (EVLN…KPGH). Lys-193 is covalently cross-linked (Glycyl lysine isopeptide (Lys-Gly) (interchain with G-Cter in SUMO)). The residue at position 213 (Ser-213) is a Phosphoserine. Thr-217 is subject to Phosphothreonine. Polar residues-rich tracts occupy residues 218–235 (QQNQ…SGRA), 310–325 (ASSS…SSKS), and 360–386 (PNSS…TLND). Ser-228 bears the Phosphoserine mark. Positions 468–578 (VGSPDMDTPG…TEDFIQSAEI (111 aa)) are self-association. The tract at residues 512-789 (LVTQAAYPAM…CIEGRSNVGK (278 aa)) is interaction with USP7. The segment at 514–740 (TQAAYPAMVQ…FLTKIEPSKP (227 aa)) is RNA-binding. In terms of domain architecture, AXH spans 536 to 667 (SPAAASPTLP…SLTLKNLKNG (132 aa)). Residues Lys-583, Lys-670, and Lys-719 each participate in a glycyl lysine isopeptide (Lys-Gly) (interchain with G-Cter in SUMO) cross-link. Residues 736–772 (EPSKPTATRKRRWSAPETRKLEKSEDEPPLTLPKPSL) are disordered. Ser-749 carries the phosphoserine modification. The Nuclear localization signal motif lies at 768–771 (PKPS).

The protein belongs to the ATXN1 family. Homooligomer. Interacts with CIC. Interacts with ANP32A, PQBP1, UBQLN4, ATXN1L and USP7. Directly interacts with RBPJ; this interaction is disrupted in the presence of Notch intracellular domain. Competes with ATXN1L for RBPJ-binding. Found in a complex with CIC and ATXN1L. Post-translationally, ubiquitinated by UBE3A, leading to its degradation by the proteasome. Phosphorylation at Ser-749 increases the pathogenicity of proteins with an expanded polyglutamine tract. In terms of processing, sumoylation is dependent on nuclear localization and phosphorylation at Ser-749. It is reduced in the presence of an expanded polyglutamine tract.

It localises to the cytoplasm. The protein localises to the nucleus. Chromatin-binding factor that repress Notch signaling in the absence of Notch intracellular domain by acting as a CBF1 corepressor. Binds to the HEY promoter and might assist, along with NCOR2, RBPJ-mediated repression. Binds RNA in vitro. May be involved in RNA metabolism. In concert with CIC and ATXN1L, involved brain development. The sequence is that of Ataxin-1 (Atxn1) from Rattus norvegicus (Rat).